Consider the following 1178-residue polypeptide: DNA-directed RNA polymerase subunit beta (1178 aa).

Residues 1 to 37 are disordered; sequence MLEGCILPDFGQSKTDVSPSQSRPQSSPNNSVPGAPN. The span at 17-33 shows a compositional bias: low complexity; sequence VSPSQSRPQSSPNNSVP.

Belongs to the RNA polymerase beta chain family. The RNAP catalytic core consists of 2 alpha, 1 beta, 1 beta' and 1 omega subunit. When a sigma factor is associated with the core the holoenzyme is formed, which can initiate transcription.

It catalyses the reaction RNA(n) + a ribonucleoside 5'-triphosphate = RNA(n+1) + diphosphate. Functionally, DNA-dependent RNA polymerase catalyzes the transcription of DNA into RNA using the four ribonucleoside triphosphates as substrates. This Mycobacterium leprae (strain Br4923) protein is DNA-directed RNA polymerase subunit beta.